The following is a 265-amino-acid chain: L-histidine 2-aminobutanoyltransferase (265 aa).

Belongs to the methyltransferase superfamily. CntL family.

The catalysed reaction is L-histidine + S-adenosyl-L-methionine = (2S)-2-amino-4-{[(1S)-1-carboxy-2-(1H-imidazol-4-yl)ethyl]amino}butanoate + S-methyl-5'-thioadenosine + H(+). Functionally, catalyzes the nucleophilic attack of one alpha-aminobutanoate moiety from SAM onto L-histidine to produce the intermediate (2S)-2-amino-4-{[(1S)-1-carboxy-2-(1H-imidazol-4-yl)ethyl]amino}butanoate. Functions in the biosynthesis of the metallophore yersinopine, which is involved in metal acquisition and thus enables bacterial growth inside the host, where metal access is limited. Therefore, this enzyme probably contributes to Yersinia virulence. The chain is L-histidine 2-aminobutanoyltransferase from Yersinia pestis.